The primary structure comprises 136 residues: Large ribosomal subunit protein bL17 (136 aa).

It belongs to the bacterial ribosomal protein bL17 family. As to quaternary structure, part of the 50S ribosomal subunit. Contacts protein L32.

The polypeptide is Large ribosomal subunit protein bL17 (Akkermansia muciniphila (strain ATCC BAA-835 / DSM 22959 / JCM 33894 / BCRC 81048 / CCUG 64013 / CIP 107961 / Muc)).